The sequence spans 325 residues: Putative HTH-type transcriptional regulatory protein MK1005 (325 aa).

The HTH cro/C1-type domain occupies 128–190; the sequence is VDELDVSRVR…FERRVAELLE (63 aa). The segment at residues 139 to 158 is a DNA-binding region (H-T-H motif); it reads RQLRREGGRITLARAEEADV.

The sequence is that of Putative HTH-type transcriptional regulatory protein MK1005 from Methanopyrus kandleri (strain AV19 / DSM 6324 / JCM 9639 / NBRC 100938).